We begin with the raw amino-acid sequence, 247 residues long: 3-deoxy-manno-octulosonate cytidylyltransferase (247 aa).

This sequence belongs to the KdsB family.

It localises to the cytoplasm. The catalysed reaction is 3-deoxy-alpha-D-manno-oct-2-ulosonate + CTP = CMP-3-deoxy-beta-D-manno-octulosonate + diphosphate. Its pathway is nucleotide-sugar biosynthesis; CMP-3-deoxy-D-manno-octulosonate biosynthesis; CMP-3-deoxy-D-manno-octulosonate from 3-deoxy-D-manno-octulosonate and CTP: step 1/1. It participates in bacterial outer membrane biogenesis; lipopolysaccharide biosynthesis. Functionally, activates KDO (a required 8-carbon sugar) for incorporation into bacterial lipopolysaccharide in Gram-negative bacteria. This Chlorobium phaeovibrioides (strain DSM 265 / 1930) (Prosthecochloris vibrioformis (strain DSM 265)) protein is 3-deoxy-manno-octulosonate cytidylyltransferase.